We begin with the raw amino-acid sequence, 221 residues long: Protein-L-isoaspartate O-methyltransferase (221 aa).

Residue Ser68 is part of the active site.

This sequence belongs to the methyltransferase superfamily. L-isoaspartyl/D-aspartyl protein methyltransferase family.

The protein localises to the cytoplasm. The enzyme catalyses [protein]-L-isoaspartate + S-adenosyl-L-methionine = [protein]-L-isoaspartate alpha-methyl ester + S-adenosyl-L-homocysteine. In terms of biological role, catalyzes the methyl esterification of L-isoaspartyl residues in peptides and proteins that result from spontaneous decomposition of normal L-aspartyl and L-asparaginyl residues. It plays a role in the repair and/or degradation of damaged proteins. This chain is Protein-L-isoaspartate O-methyltransferase, found in Desulfosudis oleivorans (strain DSM 6200 / JCM 39069 / Hxd3) (Desulfococcus oleovorans).